The chain runs to 120 residues: Ribonuclease P protein component (120 aa).

The protein belongs to the RnpA family. Consists of a catalytic RNA component (M1 or rnpB) and a protein subunit.

The catalysed reaction is Endonucleolytic cleavage of RNA, removing 5'-extranucleotides from tRNA precursor.. In terms of biological role, RNaseP catalyzes the removal of the 5'-leader sequence from pre-tRNA to produce the mature 5'-terminus. It can also cleave other RNA substrates such as 4.5S RNA. The protein component plays an auxiliary but essential role in vivo by binding to the 5'-leader sequence and broadening the substrate specificity of the ribozyme. The polypeptide is Ribonuclease P protein component (Desulfotalea psychrophila (strain LSv54 / DSM 12343)).